We begin with the raw amino-acid sequence, 396 residues long: Lysophospholipid transporter LplT (396 aa).

Topologically, residues 1–17 are periplasmic; it reads MSESVHTNTSLWSKGMK. Residues 18–38 traverse the membrane as a helical segment; it reads AVIVAQFLSAFGDNALLFATL. Residues 39–52 are Cytoplasmic-facing; it reads ALLKAQFYPEWSQP. A helical transmembrane segment spans residues 53 to 73; the sequence is ILQMVFVGAYILLAPFVGQVA. The Periplasmic portion of the chain corresponds to 74 to 90; that stretch reads DSFAKGRVMMFANGLKL. The chain crosses the membrane as a helical span at residues 91-111; that stretch reads LGAASICFGINPFLGYTLVGV. Residues 112–144 are Cytoplasmic-facing; the sequence is GAAAYSPAKYGILGELTTGSKLVKANGLMEASA. The helical transmembrane segment at 145–165 threads the bilayer; that stretch reads IAAILLGSVAGGVLADWHVLV. A topological domain (periplasmic) is located at residue Ala-166. The helical transmembrane segment at 167 to 187 threads the bilayer; sequence LAACALAYGGAVVANIYIPKL. At 188–225 the chain is on the cytoplasmic side; sequence AARPGQSWNLINMTRSFLNACTSLWCNGETRFSLVGTS. The helical transmembrane segment at 226–246 threads the bilayer; that stretch reads LFWGAGVTLRFLLVLWVPVAL. The Periplasmic portion of the chain corresponds to 247 to 255; it reads GITDNATPT. Residues 256–276 traverse the membrane as a helical segment; it reads YLNAMVAIGIVVGAGAAAKLV. At 277-279 the chain is on the cytoplasmic side; the sequence is TLE. A helical membrane pass occupies residues 280–300; it reads TVSRCMPAGILIGVVVPIFSL. Over 301–303 the chain is Periplasmic; it reads QHE. A helical transmembrane segment spans residues 304 to 324; sequence LLPAYALLMLIGVLGGFFVVP. The Cytoplasmic portion of the chain corresponds to 325–342; it reads LNALLQERGKKSVGAGNA. Residues 343 to 363 traverse the membrane as a helical segment; that stretch reads IAVQNLGENSAMLLMLGIYSL. Residues 364 to 365 lie on the Periplasmic side of the membrane; sequence AV. Residues 366–386 traverse the membrane as a helical segment; that stretch reads MVGIPVVPIGIGFGALFALAI. The Cytoplasmic portion of the chain corresponds to 387 to 396; the sequence is TALWIWQRRH.

Belongs to the major facilitator superfamily. LplT (TC 2.A.1.42) family.

It is found in the cell inner membrane. Functionally, catalyzes the facilitated diffusion of 2-acyl-glycero-3-phosphoethanolamine (2-acyl-GPE) into the cell. The protein is Lysophospholipid transporter LplT of Shigella flexneri.